The sequence spans 73 residues: U-scoloptoxin(15)-Sm3a (73 aa).

An N-terminal signal peptide occupies residues 1–23 (MERKVFLLLFVIVLLTLPGFMSA).

This sequence belongs to the scoloptoxin-15 family. Post-translationally, contains 2 disulfide bonds. Expressed by the venom gland.

Its subcellular location is the secreted. The polypeptide is U-scoloptoxin(15)-Sm3a (Scolopendra morsitans (Tanzanian blue ringleg centipede)).